A 31-amino-acid chain; its full sequence is Protamine-1B (31 aa).

Residues 1–31 form a disordered region; it reads MPRRRRASRRIRRRRRPRVSRRRRRGGRRRR.

Testis.

The protein resides in the nucleus. Its subcellular location is the chromosome. Its function is as follows. Protamines substitute for histones in the chromatin of sperm during the haploid phase of spermatogenesis. They compact sperm DNA into a highly condensed, stable and inactive complex. In Oncorhynchus mykiss (Rainbow trout), this protein is Protamine-1B.